The chain runs to 150 residues: Alkaline nuclease (150 aa).

It belongs to the baculo-herpesviridae alkaline nuclease family.

This Suid herpesvirus 1 (strain NIA-3) (SuHV-1) protein is Alkaline nuclease (UL12).